The sequence spans 190 residues: Peptidyl-prolyl cis-trans isomerase A (190 aa).

Residues 1–24 (MLKSTLAAVAAVFALSALSPAALA) form the signal peptide. The 162-residue stretch at 27 to 188 (GDPHVLLTTS…KPVVILSAKV (162 aa)) folds into the PPIase cyclophilin-type domain.

The protein belongs to the cyclophilin-type PPIase family.

The protein resides in the periplasm. The catalysed reaction is [protein]-peptidylproline (omega=180) = [protein]-peptidylproline (omega=0). Its function is as follows. PPIases accelerate the folding of proteins. It catalyzes the cis-trans isomerization of proline imidic peptide bonds in oligopeptides. The sequence is that of Peptidyl-prolyl cis-trans isomerase A (ppiA) from Salmonella typhimurium (strain LT2 / SGSC1412 / ATCC 700720).